A 308-amino-acid polypeptide reads, in one-letter code: uncharacterized protein (308 aa).

Residues Met-1 to Thr-60 enclose the HTH lysR-type domain. A DNA-binding region (H-T-H motif) is located at residues Phe-20–Lys-39.

This sequence belongs to the LysR transcriptional regulatory family.

This is an uncharacterized protein from Shigella flexneri.